We begin with the raw amino-acid sequence, 102 residues long: Small ribosomal subunit protein uS10 (102 aa).

It belongs to the universal ribosomal protein uS10 family. As to quaternary structure, part of the 30S ribosomal subunit.

Its function is as follows. Involved in the binding of tRNA to the ribosomes. This Dehalococcoides mccartyi (strain ATCC BAA-2266 / KCTC 15142 / 195) (Dehalococcoides ethenogenes (strain 195)) protein is Small ribosomal subunit protein uS10.